Consider the following 298-residue polypeptide: Glycine--tRNA ligase alpha subunit (298 aa).

It belongs to the class-II aminoacyl-tRNA synthetase family. In terms of assembly, tetramer of two alpha and two beta subunits.

The protein localises to the cytoplasm. It catalyses the reaction tRNA(Gly) + glycine + ATP = glycyl-tRNA(Gly) + AMP + diphosphate. This is Glycine--tRNA ligase alpha subunit from Helicobacter pylori (strain Shi470).